The chain runs to 384 residues: Lipoprotein LprN (384 aa).

The signal sequence occupies residues 1–20; it reads MNRIWLRAIILTASSALLAG. Cys-21 carries the N-palmitoyl cysteine lipid modification. Cys-21 carries S-diacylglycerol cysteine lipidation.

Lipidated upon expression in E.coli.

It is found in the cell membrane. Its function is as follows. Stimulates the host (mouse) immune response; lipidated protein produced in E.coli stimulates T-cell proliferation in mice previously sensitized with LprN. Spleenocytes from these mice produce increased amounts of TNF-alpha and IFN-gamma, as well as somewhat increased nitric oxide levels, upon subsequent challenge with LprN. Previously sensitized mice infected with M.tuberculosis have an exacerbated disease response, suggesting this lipoprotein may down-regulate the host's immune response. The sequence is that of Lipoprotein LprN (lprN) from Mycobacterium tuberculosis (strain ATCC 25618 / H37Rv).